The primary structure comprises 233 residues: MASGLPHPVLLSDLVGLGHINVGGQSVEFKHVFYTWCVMAMLFAVSFIVRGKIKMVPGKLQNIFEVIIGGLEEFVVSITGEDGRKVYPVLIVFFLFILCMNLTGLVPGFDAPTANINTTASLALFCFIYYNYIGIQRWGAGYIKHFMGPMWWLSPLMLPLELISHTARPLSLSLRLFGNIRGEEFVLILFFMLAPIIGTIPIYFLFTLAKVLQAFIFFMLATIYLKGSLEHAH.

7 helical membrane-spanning segments follow: residues 29–49 (FKHV…SFIV), 60–80 (LQNI…SITG), 89–109 (VLIV…VPGF), 115–135 (NINT…YIGI), 143–163 (IKHF…LELI), 185–205 (FVLI…IYFL), and 206–226 (FTLA…IYLK).

The protein belongs to the ATPase A chain family. In terms of assembly, F-type ATPases have 2 components, CF(1) - the catalytic core - and CF(0) - the membrane proton channel. CF(1) has five subunits: alpha(3), beta(3), gamma(1), delta(1), epsilon(1). CF(0) has three main subunits: a(1), b(2) and c(9-12). The alpha and beta chains form an alternating ring which encloses part of the gamma chain. CF(1) is attached to CF(0) by a central stalk formed by the gamma and epsilon chains, while a peripheral stalk is formed by the delta and b chains.

It is found in the cell inner membrane. Its function is as follows. Key component of the proton channel; it plays a direct role in the translocation of protons across the membrane. This chain is ATP synthase subunit a, found in Oleidesulfovibrio alaskensis (strain ATCC BAA-1058 / DSM 17464 / G20) (Desulfovibrio alaskensis).